We begin with the raw amino-acid sequence, 180 residues long: MMKFKPNQTRTYDREGFKKRAACLCFRSEQEDEVLLVSSSRYPDQWIVPGGGMEPEEEPGGAAVREVYEEAGVKGKLGRLLGIFENQDRKHRTYVYVLTVTEILEDWEDSVNIGRKREWFKVEDAIKVLQCHKPVHAEYLEKLKLGCSPANGNSTVPSLPDNNALFVTAAQTSGLPSSVR.

An N-acetylmethionine modification is found at M1. Residues R10, 18 to 20 (KKR), and 39 to 41 (SSR) contribute to the substrate site. A Nudix hydrolase domain is found at 18–144 (KKRAACLCFR…VHAEYLEKLK (127 aa)). Residues G50 and E66 each contribute to the Mg(2+) site. A Nudix box motif is present at residues 51–72 (GGMEPEEEPGGAAVREVYEEAG). The active-site Proton acceptor is E69. E70 is a binding site for Mg(2+). Residues 89–91 (RKH), R115, and K133 contribute to the substrate site.

Belongs to the Nudix hydrolase family. DIPP subfamily. Mg(2+) is required as a cofactor. Requires Mn(2+) as cofactor. In terms of tissue distribution, expressed in heart and, at lower level in skeletal muscle, pancreas and kidney.

The protein localises to the cytoplasm. The enzyme catalyses diphospho-myo-inositol polyphosphate + H2O = myo-inositol polyphosphate + phosphate.. It carries out the reaction 5-diphospho-1D-myo-inositol 1,2,3,4,6-pentakisphosphate + H2O = 1D-myo-inositol hexakisphosphate + phosphate + H(+). The catalysed reaction is 3,5-bis(diphospho)-1D-myo-inositol 1,2,4,6-tetrakisphosphate + H2O = 3-diphospho-1D-myo-inositol 1,2,4,5,6-pentakisphosphate + phosphate + 2 H(+). It catalyses the reaction 5-diphospho-1D-myo-inositol 1,3,4,6-tetrakisphosphate + H2O = 1D-myo-inositol 1,3,4,5,6-pentakisphosphate + phosphate + H(+). The enzyme catalyses P(1),P(6)-bis(5'-adenosyl) hexaphosphate + H2O = 2 ATP + 2 H(+). It carries out the reaction P(1),P(5)-bis(5'-adenosyl) pentaphosphate + H2O = ADP + ATP + 2 H(+). The catalysed reaction is 5-phospho-alpha-D-ribose 1-diphosphate + H2O = alpha-D-ribose 1,5-bisphosphate + phosphate + H(+). Cleaves the beta-phosphate from diphosphoinositol polyphosphates such as PP-InsP5 (diphosphoinositol pentakisphosphate), PP-InsP4 (diphosphoinositol tetrakisphosphate) and [PP]2-InsP4 (bisdiphosphoinositol tetrakisphosphate), suggesting that it may play a role in signal transduction. Diadenosine polyphosphates, particularly Ap6A (P(1),P(6)-bis(5a-adenosyl) hexaphosphate) and Ap5A (P(1),P(5)-bis(5'-adenosyl) pentaphosphate) are downstream effectors of a signaling cascade that regulates cardiac KATP channels, can also be substrates, although with lower preference than the diphosphoinositol polyphosphates. Can also catalyze the hydrolysis of 5-phosphoribose 1-diphosphate, generating the glycolytic activator ribose 1,5-bisphosphate. Does not play a role in U8 snoRNA decapping activity. Binds U8 snoRNA. The sequence is that of Diphosphoinositol polyphosphate phosphohydrolase 2 from Homo sapiens (Human).